The following is a 350-amino-acid chain: Glycolate oxidase subunit GlcE (350 aa).

The 173-residue stretch at 1 to 173 (MLRECDYSQA…TEISMKVLPR (173 aa)) folds into the FAD-binding PCMH-type domain.

As to quaternary structure, the glycolate oxidase likely consists of three subunits, GlcD, GlcE and GlcF. It depends on FAD as a cofactor.

Its subcellular location is the cell inner membrane. The enzyme catalyses glycolate + A = glyoxylate + AH2. The catalysed reaction is (R)-lactate + A = pyruvate + AH2. Its activity is regulated as follows. In vitro the glycolate oxidase activity is inhibited by the sulfhydryl inhibitors CuSO4 and PCMB, by KCN, but not by the metal complexing agent EDTA. In terms of biological role, component of a complex that catalyzes the oxidation of glycolate to glyoxylate. Is required for E.coli to grow on glycolate as a sole source of carbon. Is also able to oxidize D-lactate ((R)-lactate) with a similar rate. Does not link directly to O(2), and 2,6-dichloroindophenol (DCIP) and phenazine methosulfate (PMS) can act as artificial electron acceptors in vitro, but the physiological molecule that functions as a primary electron acceptor during glycolate oxidation is unknown. The protein is Glycolate oxidase subunit GlcE of Escherichia coli (strain K12).